A 390-amino-acid polypeptide reads, in one-letter code: AIATVITFLILFTIFGNSLVILAVLTSRSLRAPQNLFLVSLAAADIMVATLIIPFSLANELLGYWYFRRTWCEVYLALDVLFCTSSIVHLCAISLDRYWAVSRALEYNSKRTPRRIKCIILTVWLIAAAISLPPLIYKGDQGPQPRGRPQCKLNQEAWYILSSSIGSFFAPCLIMILVYLRIYLIAKRSHRRGPGAKGGPRKGESKQPHSLDSGPSALANLPTLASSLAVAGEANGHSMPPGEKERETSEDPGTPTLPPSWPVLPNSGQGQKGGVCGASLEEEADKEEEEECGPPAVPASPATACNPPLQQPQGSQVLATLRGQVFLGRGVGAAGGQWWRRWAQLTREKRFTFVLAVVIGVFVLCWFPFFFSYSLGAICPQHCKVPHGLF.

The helical transmembrane segment at 1 to 25 (AIATVITFLILFTIFGNSLVILAVL) threads the bilayer. Residues 26–36 (TSRSLRAPQNL) are Cytoplasmic-facing. Residues 37–62 (FLVSLAAADIMVATLIIPFSLANELL) form a helical membrane-spanning segment. The Extracellular portion of the chain corresponds to 63–72 (GYWYFRRTWC). Cysteines 72 and 151 form a disulfide. The helical transmembrane segment at 73 to 95 (EVYLALDVLFCTSSIVHLCAISL) threads the bilayer. Residues 96–117 (DRYWAVSRALEYNSKRTPRRIK) lie on the Cytoplasmic side of the membrane. Residues 118–140 (CIILTVWLIAAAISLPPLIYKGD) form a helical membrane-spanning segment. Topologically, residues 141 to 156 (QGPQPRGRPQCKLNQE) are extracellular. A helical transmembrane segment spans residues 157 to 180 (AWYILSSSIGSFFAPCLIMILVYL). The Cytoplasmic segment spans residues 181 to 354 (RIYLIAKRSH…LTREKRFTFV (174 aa)). Disordered stretches follow at residues 191-218 (RRGPGAKGGPRKGESKQPHSLDSGPSAL) and 233-311 (EANG…PLQQ). Residues 280-292 (LEEEADKEEEEEC) show a composition bias toward acidic residues. Residues 355–378 (LAVVIGVFVLCWFPFFFSYSLGAI) form a helical membrane-spanning segment. Over 379-390 (CPQHCKVPHGLF) the chain is Extracellular.

It belongs to the G-protein coupled receptor 1 family. Adrenergic receptor subfamily. ADRA2B sub-subfamily. In terms of assembly, interacts with RAB26. Interacts with PPP1R9B. Interacts with GGA1, GGA2 and GGA3.

It is found in the cell membrane. Functionally, alpha-2 adrenergic receptors mediate the catecholamine-induced inhibition of adenylate cyclase through the action of G proteins. In Dugong dugon (Dugong), this protein is Alpha-2B adrenergic receptor (ADRA2B).